A 265-amino-acid polypeptide reads, in one-letter code: S-adenosylmethionine decarboxylase proenzyme (265 aa).

The active-site Schiff-base intermediate with substrate; via pyruvic acid is S114. A Pyruvic acid (Ser); by autocatalysis modification is found at S114. H119 (proton acceptor; for processing activity) is an active-site residue. The Proton donor; for catalytic activity role is filled by C142.

The protein belongs to the prokaryotic AdoMetDC family. Type 2 subfamily. As to quaternary structure, heterooctamer of four alpha and four beta chains arranged as a tetramer of alpha/beta heterodimers. Pyruvate serves as cofactor. In terms of processing, is synthesized initially as an inactive proenzyme. Formation of the active enzyme involves a self-maturation process in which the active site pyruvoyl group is generated from an internal serine residue via an autocatalytic post-translational modification. Two non-identical subunits are generated from the proenzyme in this reaction, and the pyruvate is formed at the N-terminus of the alpha chain, which is derived from the carboxyl end of the proenzyme. The post-translation cleavage follows an unusual pathway, termed non-hydrolytic serinolysis, in which the side chain hydroxyl group of the serine supplies its oxygen atom to form the C-terminus of the beta chain, while the remainder of the serine residue undergoes an oxidative deamination to produce ammonia and the pyruvoyl group blocking the N-terminus of the alpha chain.

The catalysed reaction is S-adenosyl-L-methionine + H(+) = S-adenosyl 3-(methylsulfanyl)propylamine + CO2. Its pathway is amine and polyamine biosynthesis; S-adenosylmethioninamine biosynthesis; S-adenosylmethioninamine from S-adenosyl-L-methionine: step 1/1. Catalyzes the decarboxylation of S-adenosylmethionine to S-adenosylmethioninamine (dcAdoMet), the propylamine donor required for the synthesis of the polyamines spermine and spermidine from the diamine putrescine. The sequence is that of S-adenosylmethionine decarboxylase proenzyme from Buchnera aphidicola subsp. Acyrthosiphon pisum (strain 5A).